An 84-amino-acid polypeptide reads, in one-letter code: MALSIKHPEADRLARELAARTGETLTEAVVMALRERLARTVGRTQVVPLREELAAIRRRCAALPVLDDRTAESILGYDDRGLPS.

In terms of assembly, forms a complex with cognate toxin VapC.

Antitoxin component of a type II toxin-antitoxin (TA) system. Upon overexpression neutralizes the effect of overexpressed cognate toxin VapC. Overexpression alone prevents cells from entering a nonculturable dormant state, probably as it binds endogenous VapC. The TA system acts as a post-transcriptional regulator of carbon metabolism; in M.smegmatis 3 TA systems (VapB-VapC, MazE-MazF and Phd-Doc) may be involved in monitoring the nutritional supply and physiological state of the cell, linking catabolic with anabolic reactions. Translation of vapC mRNA requires VapB. The sequence is that of Antitoxin VapB (vapB) from Mycolicibacterium smegmatis (strain ATCC 700084 / mc(2)155) (Mycobacterium smegmatis).